A 185-amino-acid chain; its full sequence is UPF0301 protein Shew_1144 (185 aa).

This sequence belongs to the UPF0301 (AlgH) family.

The polypeptide is UPF0301 protein Shew_1144 (Shewanella loihica (strain ATCC BAA-1088 / PV-4)).